The sequence spans 156 residues: ATP synthase subunit b (156 aa).

A helical transmembrane segment spans residues 3 to 23 (ITFTIFAQSLAFAALIWIVAT).

The protein belongs to the ATPase B chain family. F-type ATPases have 2 components, F(1) - the catalytic core - and F(0) - the membrane proton channel. F(1) has five subunits: alpha(3), beta(3), gamma(1), delta(1), epsilon(1). F(0) has three main subunits: a(1), b(2) and c(10-14). The alpha and beta chains form an alternating ring which encloses part of the gamma chain. F(1) is attached to F(0) by a central stalk formed by the gamma and epsilon chains, while a peripheral stalk is formed by the delta and b chains.

Its subcellular location is the cell inner membrane. Functionally, f(1)F(0) ATP synthase produces ATP from ADP in the presence of a proton or sodium gradient. F-type ATPases consist of two structural domains, F(1) containing the extramembraneous catalytic core and F(0) containing the membrane proton channel, linked together by a central stalk and a peripheral stalk. During catalysis, ATP synthesis in the catalytic domain of F(1) is coupled via a rotary mechanism of the central stalk subunits to proton translocation. Component of the F(0) channel, it forms part of the peripheral stalk, linking F(1) to F(0). In Xylella fastidiosa (strain M23), this protein is ATP synthase subunit b.